We begin with the raw amino-acid sequence, 196 residues long: Imidazoleglycerol-phosphate dehydratase (196 aa).

This sequence belongs to the imidazoleglycerol-phosphate dehydratase family.

Its subcellular location is the cytoplasm. It carries out the reaction D-erythro-1-(imidazol-4-yl)glycerol 3-phosphate = 3-(imidazol-4-yl)-2-oxopropyl phosphate + H2O. It functions in the pathway amino-acid biosynthesis; L-histidine biosynthesis; L-histidine from 5-phospho-alpha-D-ribose 1-diphosphate: step 6/9. The protein is Imidazoleglycerol-phosphate dehydratase of Granulibacter bethesdensis (strain ATCC BAA-1260 / CGDNIH1).